The following is a 200-amino-acid chain: 3-isopropylmalate dehydratase small subunit (200 aa).

It belongs to the LeuD family. LeuD type 1 subfamily. In terms of assembly, heterodimer of LeuC and LeuD.

The catalysed reaction is (2R,3S)-3-isopropylmalate = (2S)-2-isopropylmalate. The protein operates within amino-acid biosynthesis; L-leucine biosynthesis; L-leucine from 3-methyl-2-oxobutanoate: step 2/4. In terms of biological role, catalyzes the isomerization between 2-isopropylmalate and 3-isopropylmalate, via the formation of 2-isopropylmaleate. In Vibrio vulnificus (strain YJ016), this protein is 3-isopropylmalate dehydratase small subunit.